The chain runs to 40 residues: Photosystem II reaction center protein J (40 aa).

The helical transmembrane segment at 8-28 (IPLWIIGTVTGILVIGLVGIF) threads the bilayer.

The protein belongs to the PsbJ family. PSII is composed of 1 copy each of membrane proteins PsbA, PsbB, PsbC, PsbD, PsbE, PsbF, PsbH, PsbI, PsbJ, PsbK, PsbL, PsbM, PsbT, PsbX, PsbY, PsbZ, Psb30/Ycf12, at least 3 peripheral proteins of the oxygen-evolving complex and a large number of cofactors. It forms dimeric complexes.

The protein localises to the plastid. It localises to the chloroplast thylakoid membrane. One of the components of the core complex of photosystem II (PSII). PSII is a light-driven water:plastoquinone oxidoreductase that uses light energy to abstract electrons from H(2)O, generating O(2) and a proton gradient subsequently used for ATP formation. It consists of a core antenna complex that captures photons, and an electron transfer chain that converts photonic excitation into a charge separation. This Jasminum nudiflorum (Winter jasmine) protein is Photosystem II reaction center protein J.